A 310-amino-acid chain; its full sequence is Ribosome production factor 2 homolog (310 aa).

The 211-residue stretch at 29 to 239 (KKTLILHGTK…VRRHRYPVES (211 aa)) folds into the Brix domain. Positions 281–310 (LSNDVKGLKRERREAKKNKDHSKKQKINPE) are disordered. Basic residues predominate over residues 295 to 310 (AKKNKDHSKKQKINPE).

This sequence belongs to the RPF2 family.

The protein localises to the nucleus. It is found in the nucleolus. In Oryza sativa subsp. japonica (Rice), this protein is Ribosome production factor 2 homolog.